The sequence spans 541 residues: Apolipoprotein N-acyltransferase (541 aa).

6 consecutive transmembrane segments (helical) span residues 21-41 (LSGF…WYSL), 54-74 (LFVS…SWML), 82-102 (LIYL…SGFS), 116-136 (FLWS…YGIF), 157-177 (FGGF…NMSF), and 189-209 (MLWV…YEYL). One can recognise a CN hydrolase domain in the interval 220–499 (LRVAVVQPAH…SGVLETSLPL (280 aa)). Glutamate 264 acts as the Proton acceptor in catalysis. Lysine 349 is a catalytic residue. Cysteine 404 (nucleophile) is an active-site residue. A helical transmembrane segment spans residues 512–532 (YPMILIAFCAVSYLGGGFLGY).

It belongs to the CN hydrolase family. Apolipoprotein N-acyltransferase subfamily.

Its subcellular location is the cell inner membrane. The enzyme catalyses N-terminal S-1,2-diacyl-sn-glyceryl-L-cysteinyl-[lipoprotein] + a glycerophospholipid = N-acyl-S-1,2-diacyl-sn-glyceryl-L-cysteinyl-[lipoprotein] + a 2-acyl-sn-glycero-3-phospholipid + H(+). The protein operates within protein modification; lipoprotein biosynthesis (N-acyl transfer). Functionally, catalyzes the phospholipid dependent N-acylation of the N-terminal cysteine of apolipoprotein, the last step in lipoprotein maturation. The polypeptide is Apolipoprotein N-acyltransferase (Chlamydia pneumoniae (Chlamydophila pneumoniae)).